Reading from the N-terminus, the 61-residue chain is Putative antitoxin PYRAB11980 (61 aa).

It belongs to the UPF0165 family.

In terms of biological role, possibly the antitoxin component of a type II toxin-antitoxin (TA) system. This Pyrococcus abyssi (strain GE5 / Orsay) protein is Putative antitoxin PYRAB11980.